Consider the following 364-residue polypeptide: UDP-3-O-acylglucosamine N-acyltransferase (364 aa).

The active-site Proton acceptor is histidine 267.

This sequence belongs to the transferase hexapeptide repeat family. LpxD subfamily. As to quaternary structure, homotrimer.

It carries out the reaction a UDP-3-O-[(3R)-3-hydroxyacyl]-alpha-D-glucosamine + a (3R)-hydroxyacyl-[ACP] = a UDP-2-N,3-O-bis[(3R)-3-hydroxyacyl]-alpha-D-glucosamine + holo-[ACP] + H(+). It functions in the pathway bacterial outer membrane biogenesis; LPS lipid A biosynthesis. Catalyzes the N-acylation of UDP-3-O-acylglucosamine using 3-hydroxyacyl-ACP as the acyl donor. Is involved in the biosynthesis of lipid A, a phosphorylated glycolipid that anchors the lipopolysaccharide to the outer membrane of the cell. The chain is UDP-3-O-acylglucosamine N-acyltransferase from Bordetella petrii (strain ATCC BAA-461 / DSM 12804 / CCUG 43448).